Here is a 429-residue protein sequence, read N- to C-terminus: Glutamyl-tRNA reductase (429 aa).

Residues Thr56–Arg59, Ser119, Glu124–Gln126, and Gln130 contribute to the substrate site. Cys57 functions as the Nucleophile in the catalytic mechanism. Residue Gly199–Ile204 participates in NADP(+) binding.

The protein belongs to the glutamyl-tRNA reductase family. In terms of assembly, homodimer.

It catalyses the reaction (S)-4-amino-5-oxopentanoate + tRNA(Glu) + NADP(+) = L-glutamyl-tRNA(Glu) + NADPH + H(+). It participates in porphyrin-containing compound metabolism; protoporphyrin-IX biosynthesis; 5-aminolevulinate from L-glutamyl-tRNA(Glu): step 1/2. Its function is as follows. Catalyzes the NADPH-dependent reduction of glutamyl-tRNA(Glu) to glutamate 1-semialdehyde (GSA). The polypeptide is Glutamyl-tRNA reductase (Herminiimonas arsenicoxydans).